We begin with the raw amino-acid sequence, 171 residues long: Co-chaperone protein HscB (171 aa).

The region spanning 2-74 (DYFTLFGLPA…LMRAEYLLSL (73 aa)) is the J domain.

It belongs to the HscB family. As to quaternary structure, interacts with HscA and stimulates its ATPase activity. Interacts with IscU.

Functionally, co-chaperone involved in the maturation of iron-sulfur cluster-containing proteins. Seems to help targeting proteins to be folded toward HscA. In Shigella flexneri serotype 5b (strain 8401), this protein is Co-chaperone protein HscB.